Here is a 455-residue protein sequence, read N- to C-terminus: MNSRLQEIRERQKLRRQLLAQQLGAESPDSIGAVLNSKDEQKEIEETRETCRASFDISVPGAKRKCLNEGEDPEEDVEEQKEDVEPQHQEESGPYEEVYKDSSTFLKGTQSLNPHNDYCQHFVDTGHRPQNFIRDGGLADRFEEYPKQRELIRLKDELISATNTPPMYLQADPDTFDLRELKCKFDVILIEPPLEEYYRESGIIANERFWNWDDIMKLNIEEISSIRSFVFLWCGSGEGLDLGRMCLRKWGFRRCEDICWIKTNKNNPGKTKTLDPKAVFQRTKEHCLMGIKGTVRRSTDGDFIHANVDIDLIITEEPEMGNIEKPVEIFHIIEHFCLGRRRLHLFGRDSTIRPGWLTVGPTLTNSNFNIEVYSTHFSEPNSYLSGCTEEIERLRPKSPPPKSMAERGGGAPRGGRGGPAAGRGDRGRERNRPNFRGDRGGFRGRGGPHRGFPPR.

A disordered region spans residues 21-96 (QQLGAESPDS…QHQEESGPYE (76 aa)). Positions 37 to 51 (SKDEQKEIEETRETC) are enriched in basic and acidic residues. Acidic residues predominate over residues 69 to 82 (EGEDPEEDVEEQKE). 2 interaction with METTL3 regions span residues 134–135 (RD) and 236–237 (SG). Positions 244–253 (RMCLRKWGFR) are positively charged region required for RNA-binding. 2 interaction with METTL3 regions span residues 254–257 (RCED) and 277–286 (KAVFQRTKEH). Residues 296–297 (RR) form a positively charged region required for RNA-binding region. The tract at residues 307–311 (NVDID) is interaction with METTL3. Residues 392 to 455 (ERLRPKSPPP…GGPHRGFPPR (64 aa)) are disordered. The segment covering 407–421 (RGGGAPRGGRGGPAA) has biased composition (gly residues). The span at 423–441 (RGDRGRERNRPNFRGDRGG) shows a compositional bias: basic and acidic residues.

The protein belongs to the MT-A70-like family. In terms of assembly, heterodimer; heterodimerizes with mettl3 to form an antiparallel heterodimer that constitutes an active methyltransferase. Component of the WMM complex, a N6-methyltransferase complex composed of a catalytic subcomplex, named MAC, and of an associated subcomplex, named MACOM. The MAC subcomplex is composed of mettl3 and mettl14.

The protein resides in the nucleus. The METTL3-METTL14 heterodimer forms a N6-methyltransferase complex that methylates adenosine residues at the N(6) position of some mRNAs and regulates the circadian clock, differentiation of embryonic stem cells and cortical neurogenesis. In the heterodimer formed with mettl3, mettl14 constitutes the RNA-binding scaffold that recognizes the substrate rather than the catalytic core. N6-methyladenosine (m6A), which takes place at the 5'-[AG]GAC-3' consensus sites of some mRNAs, plays a role in mRNA stability and processing. The sequence is that of N(6)-adenosine-methyltransferase non-catalytic subunit METTL14 (mettl14) from Danio rerio (Zebrafish).